Reading from the N-terminus, the 165-residue chain is Cyanate hydratase (165 aa).

The tract at residues 1–20 (MAQNKANTVSQLQSLKNKSG) is disordered. Catalysis depends on residues arginine 90, glutamate 93, and serine 116.

It belongs to the cyanase family.

The enzyme catalyses cyanate + hydrogencarbonate + 3 H(+) = NH4(+) + 2 CO2. Catalyzes the reaction of cyanate with bicarbonate to produce ammonia and carbon dioxide. The protein is Cyanate hydratase of Medicago truncatula (Barrel medic).